The following is a 149-amino-acid chain: Probable ubiquitin-conjugating enzyme E2 W (149 aa).

The UBC core domain maps to 4–149; the sequence is RYAKRLQKEL…VRWMFHDDTV (146 aa). Residue Cys88 is the Glycyl thioester intermediate of the active site.

The protein belongs to the ubiquitin-conjugating enzyme family.

It carries out the reaction S-ubiquitinyl-[E1 ubiquitin-activating enzyme]-L-cysteine + [E2 ubiquitin-conjugating enzyme]-L-cysteine = [E1 ubiquitin-activating enzyme]-L-cysteine + S-ubiquitinyl-[E2 ubiquitin-conjugating enzyme]-L-cysteine.. The catalysed reaction is S-ubiquitinyl-[E1 ubiquitin-activating enzyme]-L-cysteine + [acceptor protein]-N-terminal-amino acid = [E1 ubiquitin-activating enzyme]-L-cysteine + N-terminal-ubiquitinyl-[acceptor protein].. Its pathway is protein modification; protein ubiquitination. Catalyzes the covalent attachment of ubiquitin to other proteins. This is Probable ubiquitin-conjugating enzyme E2 W (ube2w) from Dictyostelium discoideum (Social amoeba).